We begin with the raw amino-acid sequence, 158 residues long: Proteinase inhibitor type-2 (158 aa).

The first 24 residues, 1–24, serve as a signal peptide directing secretion; that stretch reads MAIHKEVSFLAYLLVLGMLLFVSA. Tandem repeats lie at residues 29-86 and 87-146. 8 cysteine pairs are disulfide-bonded: Cys-33–Cys-121, Cys-37–Cys-117, Cys-45–Cys-127, Cys-57–Cys-94, Cys-60–Cys-78, Cys-61–Cys-90, Cys-67–Cys-103, and Cys-120–Cys-138.

This sequence belongs to the protease inhibitor I20 (potato type II proteinase inhibitor) family.

The chain is Proteinase inhibitor type-2 from Solanum tuberosum (Potato).